The sequence spans 229 residues: Large ribosomal subunit protein uL1 (229 aa).

It belongs to the universal ribosomal protein uL1 family. In terms of assembly, part of the 50S ribosomal subunit.

In terms of biological role, binds directly to 23S rRNA. The L1 stalk is quite mobile in the ribosome, and is involved in E site tRNA release. Its function is as follows. Protein L1 is also a translational repressor protein, it controls the translation of the L11 operon by binding to its mRNA. The polypeptide is Large ribosomal subunit protein uL1 (Clostridium beijerinckii (strain ATCC 51743 / NCIMB 8052) (Clostridium acetobutylicum)).